Here is a 286-residue protein sequence, read N- to C-terminus: MTFTIMTDSTADLNQTWAEDHDIVLIGLTILCDGEVYETVGPNRISSDYLLKKMKAGSHPQTSQINVGEFEKVFREHARNNKALLYLAFSSVLSGTYQSALMACDLVREDYPDAVIEIVDTLAAAGGEGYLTILAAEARDSGKNLLETKDIVEAVIPRLRTYFLVDDLFHLMRGGRLSKGSAFLGSLASIKPLLWIDEEGKLVPIAKIRGRQKAIKEMVAQVEKDIADSTVIVSYTSDQGSAEKLREELLAHENISDVLMMPLGPVISAHVGPNTLAVFVIGQNSR.

In terms of domain architecture, DegV spans 3-282 (FTIMTDSTAD…PNTLAVFVIG (280 aa)). Hexadecanoate is bound by residues T62 and S94.

In terms of biological role, may bind long-chain fatty acids, such as palmitate, and may play a role in lipid transport or fatty acid metabolism. This Streptococcus pyogenes serotype M3 (strain SSI-1) protein is DegV domain-containing protein SPs1668.